Consider the following 148-residue polypeptide: NADPH-dependent 7-cyano-7-deazaguanine reductase (148 aa).

C50 acts as the Thioimide intermediate in catalysis. D57 (proton donor) is an active-site residue. Substrate is bound by residues 72-74 (VES) and 91-92 (HE).

Belongs to the GTP cyclohydrolase I family. QueF type 1 subfamily.

Its subcellular location is the cytoplasm. It catalyses the reaction 7-aminomethyl-7-carbaguanine + 2 NADP(+) = 7-cyano-7-deazaguanine + 2 NADPH + 3 H(+). The protein operates within tRNA modification; tRNA-queuosine biosynthesis. Functionally, catalyzes the NADPH-dependent reduction of 7-cyano-7-deazaguanine (preQ0) to 7-aminomethyl-7-deazaguanine (preQ1). In Helicobacter pylori (strain ATCC 700392 / 26695) (Campylobacter pylori), this protein is NADPH-dependent 7-cyano-7-deazaguanine reductase.